Consider the following 427-residue polypeptide: Tryptophan synthase beta chain (427 aa).

N6-(pyridoxal phosphate)lysine is present on lysine 100.

Belongs to the TrpB family. As to quaternary structure, tetramer of two alpha and two beta chains. The cofactor is pyridoxal 5'-phosphate.

It catalyses the reaction (1S,2R)-1-C-(indol-3-yl)glycerol 3-phosphate + L-serine = D-glyceraldehyde 3-phosphate + L-tryptophan + H2O. It functions in the pathway amino-acid biosynthesis; L-tryptophan biosynthesis; L-tryptophan from chorismate: step 5/5. Functionally, the beta subunit is responsible for the synthesis of L-tryptophan from indole and L-serine. The protein is Tryptophan synthase beta chain (trpB) of Streptomyces coelicolor (strain ATCC BAA-471 / A3(2) / M145).